The chain runs to 146 residues: 3-dehydroquinate dehydratase (146 aa).

Tyr22 acts as the Proton acceptor in catalysis. Substrate-binding residues include Asn73, His79, and Asp86. The active-site Proton donor is the His101. Substrate contacts are provided by residues 102 to 103 (IS) and Arg112.

The protein belongs to the type-II 3-dehydroquinase family. In terms of assembly, homododecamer.

The catalysed reaction is 3-dehydroquinate = 3-dehydroshikimate + H2O. The protein operates within metabolic intermediate biosynthesis; chorismate biosynthesis; chorismate from D-erythrose 4-phosphate and phosphoenolpyruvate: step 3/7. Its function is as follows. Catalyzes a trans-dehydration via an enolate intermediate. In Corynebacterium pseudotuberculosis (strain C231), this protein is 3-dehydroquinate dehydratase (aroQ).